The sequence spans 508 residues: Early growth response protein 1 (508 aa).

Disordered stretches follow at residues 18–78 (PQFL…ESFS) and 136–210 (MTNP…QYPP). Low complexity predominate over residues 33–42 (NNSSSSSSSS). Positions 43–52 (SGGGGGGGSN) are enriched in gly residues. A compositionally biased stretch (low complexity) spans 139 to 164 (PPTSSSSAPSPAASSSSSASQSPPLS). Residue Lys278 forms a Glycyl lysine isopeptide (Lys-Gly) (interchain with G-Cter in SUMO2) linkage. Residues 292 to 311 (SRMRKYPNRPSKTPPHERPY) form a disordered region. 3 consecutive C2H2-type zinc fingers follow at residues 311–335 (YACP…IRIH), 341–363 (FQCR…IRTH), and 369–391 (FACD…TKIH). The interval 382 to 453 (DERKRHTKIH…SSTYPSPAHS (72 aa)) is disordered. Basic residues predominate over residues 386–396 (RHTKIHLRQKD). The span at 402-450 (SVVASSAASSLSSYPSPVATSYPSPATTSFPSPVPTSYSSPGSSTYPSP) shows a compositional bias: low complexity. 7 tandem repeats follow at residues 413 to 420 (SSYPSPVA), 421 to 428 (TSYPSPAT), 429 to 436 (TSFPSPVP), 437 to 444 (TSYSSPGS), 445 to 452 (STYPSPAH), 453 to 460 (SGFPSPSV), and 462 to 468 (TTYASVP). The interval 413–468 (SSYPSPVATSYPSPATTSFPSPVPTSYSSPGSSTYPSPAHSGFPSPSVATTYASVP) is 7 X 8 AA tandem repeats of [TS](2)-[FY]-[PS]-S-P-[GSAV]-X.

Belongs to the EGR C2H2-type zinc-finger protein family. As to quaternary structure, interacts with SNAI1 and SP1 upon 12-O-tetradecanoylphorbol-13-acetate (TPA) induction. In terms of tissue distribution, detected in kidney thick ascending limbs and collecting ducts (at protein level).

It is found in the nucleus. It localises to the cytoplasm. In terms of biological role, transcriptional regulator. Recognizes and binds to the DNA sequence 5'-GCG(T/G)GGGCG-3'(EGR-site) in the promoter region of target genes. Binds double-stranded target DNA, irrespective of the cytosine methylation status. Regulates the transcription of numerous target genes, and thereby plays an important role in regulating the response to growth factors, DNA damage, and ischemia. Plays a role in the regulation of cell survival, proliferation and cell death. Activates expression of p53/TP53 and TGFB1, and thereby helps prevent tumor formation. Required for normal progress through mitosis and normal proliferation of hepatocytes after partial hepatectomy. Mediates responses to ischemia and hypoxia; regulates the expression of proteins such as IL1B and CXCL2 that are involved in inflammatory processes and development of tissue damage after ischemia. Regulates biosynthesis of luteinizing hormone (LHB) in the pituitary. Regulates the amplitude of the expression rhythms of clock genes: BMAL1, PER2 and NR1D1 in the liver via the activation of PER1 (clock repressor) transcription. Regulates the rhythmic expression of core-clock gene BMAL1 in the suprachiasmatic nucleus (SCN). Regulates biosynthesis of glucocorticoid receptor GR/NR3C1 in the hippocampus and thereby may play a role in the behavioral and hypothalamic-pituitary-adrenal responses to stress in offspring. The protein is Early growth response protein 1 (Egr1) of Rattus norvegicus (Rat).